We begin with the raw amino-acid sequence, 145 residues long: Arginine repressor (145 aa).

This sequence belongs to the ArgR family.

It is found in the cytoplasm. The protein operates within amino-acid biosynthesis; L-arginine biosynthesis [regulation]. In terms of biological role, regulates arginine biosynthesis genes. This Streptococcus pyogenes serotype M3 (strain ATCC BAA-595 / MGAS315) protein is Arginine repressor.